Reading from the N-terminus, the 421-residue chain is 3-isopropylmalate dehydratase large subunit (421 aa).

Residues Cys-302, Cys-362, and Cys-365 each coordinate [4Fe-4S] cluster.

This sequence belongs to the aconitase/IPM isomerase family. LeuC type 2 subfamily. As to quaternary structure, heterodimer of LeuC and LeuD. Requires [4Fe-4S] cluster as cofactor.

It catalyses the reaction (2R,3S)-3-isopropylmalate = (2S)-2-isopropylmalate. It participates in amino-acid biosynthesis; L-leucine biosynthesis; L-leucine from 3-methyl-2-oxobutanoate: step 2/4. Functionally, catalyzes the isomerization between 2-isopropylmalate and 3-isopropylmalate, via the formation of 2-isopropylmaleate. This chain is 3-isopropylmalate dehydratase large subunit, found in Nitratiruptor sp. (strain SB155-2).